A 271-amino-acid polypeptide reads, in one-letter code: Phosphonoacetaldehyde hydrolase (271 aa).

D12 (nucleophile) is an active-site residue. Mg(2+) is bound by residues D12 and A14. The active-site Schiff-base intermediate with substrate is K54. D188 lines the Mg(2+) pocket.

Belongs to the HAD-like hydrolase superfamily. PhnX family. Homodimer. Mg(2+) serves as cofactor.

It carries out the reaction phosphonoacetaldehyde + H2O = acetaldehyde + phosphate + H(+). Functionally, involved in phosphonate degradation. This chain is Phosphonoacetaldehyde hydrolase, found in Vibrio parahaemolyticus serotype O3:K6 (strain RIMD 2210633).